The chain runs to 479 residues: PRAME family member 19 (479 aa).

One copy of the LRR 1 repeat lies at 15–38; it reads QSLLRDQALAISVLDELPRELFPR. The stretch at 97–124 is one LRR 1; degenerate repeat; that stretch reads RWKLQVLEMRDVDENFWTIWSGARPLSC. The LRR 2; degenerate repeat unit spans residues 179-203; that stretch reads HLCCTKVVNYSMNILNFRNILETVY. Residues 204–230 form an LRR 3; degenerate repeat; the sequence is PDSIQVLEIWNMCWPCMVAEVSRYLSQ. An LRR 4; degenerate repeat occupies 231 to 265; the sequence is MKNLRKLFISDGCGYLPSFESQGQLVAEFSSVFLR. 5 LRR repeats span residues 266-291, 292-323, 324-342, 348-375, and 376-400; these read LEYL…IRCL, KSPL…SQLK, QLNL…PLRA, AATL…ALSR, and CSNL…LLRH.

This sequence belongs to the PRAME family.

The polypeptide is PRAME family member 19 (Homo sapiens (Human)).